Here is a 101-residue protein sequence, read N- to C-terminus: Small ribosomal subunit protein uS14 (101 aa).

This sequence belongs to the universal ribosomal protein uS14 family. In terms of assembly, part of the 30S ribosomal subunit. Contacts proteins S3 and S10.

Functionally, binds 16S rRNA, required for the assembly of 30S particles and may also be responsible for determining the conformation of the 16S rRNA at the A site. The protein is Small ribosomal subunit protein uS14 of Buchnera aphidicola subsp. Baizongia pistaciae (strain Bp).